Consider the following 236-residue polypeptide: Leucyl/phenylalanyl-tRNA--protein transferase (236 aa).

Belongs to the L/F-transferase family.

The protein resides in the cytoplasm. It carries out the reaction N-terminal L-lysyl-[protein] + L-leucyl-tRNA(Leu) = N-terminal L-leucyl-L-lysyl-[protein] + tRNA(Leu) + H(+). It catalyses the reaction N-terminal L-arginyl-[protein] + L-leucyl-tRNA(Leu) = N-terminal L-leucyl-L-arginyl-[protein] + tRNA(Leu) + H(+). The catalysed reaction is L-phenylalanyl-tRNA(Phe) + an N-terminal L-alpha-aminoacyl-[protein] = an N-terminal L-phenylalanyl-L-alpha-aminoacyl-[protein] + tRNA(Phe). In terms of biological role, functions in the N-end rule pathway of protein degradation where it conjugates Leu, Phe and, less efficiently, Met from aminoacyl-tRNAs to the N-termini of proteins containing an N-terminal arginine or lysine. In Shewanella sp. (strain MR-7), this protein is Leucyl/phenylalanyl-tRNA--protein transferase.